A 266-amino-acid chain; its full sequence is Energy-coupling factor transporter transmembrane protein EcfT (266 aa).

7 consecutive transmembrane segments (helical) span residues 26–46 (VIATLLFSIALFLLPTLRSVT), 47–67 (LAGLPIIIAIVATRLPIHYIL), 69–89 (GIKPLWIFIVFTLLVHLLSTP), 116–136 (LIWLYAATSLLTLTTSPIALT), 151–171 (LPVHEFAMMTSIALRFIPTLI), 192–212 (SLVARVKSLVPLMVPLLLSAF), and 246–266 (YAVTVAVSGVFILICLWKKAL).

This sequence belongs to the energy-coupling factor EcfT family. In terms of assembly, forms a stable energy-coupling factor (ECF) transporter complex composed of 2 membrane-embedded substrate-binding proteins (S component), 2 ATP-binding proteins (A component) and 2 transmembrane proteins (T component). May be able to interact with more than 1 S component at a time.

The protein resides in the cell membrane. In terms of biological role, transmembrane (T) component of an energy-coupling factor (ECF) ABC-transporter complex. Unlike classic ABC transporters this ECF transporter provides the energy necessary to transport a number of different substrates. This is Energy-coupling factor transporter transmembrane protein EcfT from Heliobacterium modesticaldum (strain ATCC 51547 / Ice1).